The chain runs to 172 residues: Phosphopantetheine adenylyltransferase (172 aa).

Substrate is bound at residue T14. ATP-binding positions include 14–15 (TF) and H22. Substrate is bound by residues K46, L78, and R92. ATP contacts are provided by residues 93-95 (GLR), E103, and 128-134 (WLYISST).

Belongs to the bacterial CoaD family. In terms of assembly, homohexamer. Mg(2+) serves as cofactor.

The protein localises to the cytoplasm. The catalysed reaction is (R)-4'-phosphopantetheine + ATP + H(+) = 3'-dephospho-CoA + diphosphate. It participates in cofactor biosynthesis; coenzyme A biosynthesis; CoA from (R)-pantothenate: step 4/5. Its function is as follows. Reversibly transfers an adenylyl group from ATP to 4'-phosphopantetheine, yielding dephospho-CoA (dPCoA) and pyrophosphate. This is Phosphopantetheine adenylyltransferase from Lawsonia intracellularis (strain PHE/MN1-00).